Consider the following 268-residue polypeptide: uncharacterized protein (268 aa).

This sequence belongs to the LarE family.

This is an uncharacterized protein from Synechocystis sp. (strain ATCC 27184 / PCC 6803 / Kazusa).